The following is a 272-amino-acid chain: Protein SSO0103 (272 aa).

Belongs to the CinA family.

This Saccharolobus solfataricus (strain ATCC 35092 / DSM 1617 / JCM 11322 / P2) (Sulfolobus solfataricus) protein is Protein SSO0103.